We begin with the raw amino-acid sequence, 629 residues long: Flap endonuclease GEN-like 1 (629 aa).

Residues 1–87 (MGVGGSFWDL…DGQPSPLKSQ (87 aa)) are N-domain. The tract at residues 2–98 (GVGGSFWDLL…RAARFFRGSG (97 aa)) is XPG-N domain. Residues D31, D78, E148, E150, D169, D171, and D221 each coordinate Mg(2+). The interval 136–221 (EYLGMPVLRA…VAMALLVGSD (86 aa)) is XPG-I domain. The tract at residues 136–225 (EYLGMPVLRA…LLVGSDHDLH (90 aa)) is I-domain. The 5'-3' exonuclease domain stretch occupies residues 221-421 (DHDLHGVPGF…MLPMLSTIYL (201 aa)). The segment at 594–617 (KKGLSGDSGKDGSRKSSDVDLSKN) is disordered. A compositionally biased stretch (basic and acidic residues) spans 601-614 (SGKDGSRKSSDVDL).

This sequence belongs to the XPG/RAD2 endonuclease family. GEN subfamily. In terms of assembly, monomer. Interacts with PCNA. PCNA stimulates the nuclease activity without altering cleavage specificity. The cofactor is Mg(2+). Highly expressed in anthers. Expressed in roots and leaves.

The protein resides in the nucleus. In terms of biological role, endonuclease which cleaves flap structures at the junction between single-stranded DNA and double-stranded DNA. Possesses both single-stranded and double-stranded DNA-binding activities. Involved in early microspore development, but does not alter meiosis or tapetal cells development. Possesses Holliday junction (HJ) resolvase activity in vitro. Cleaves HJ at symmetrically related sites of the branch point. The sequence is that of Flap endonuclease GEN-like 1 from Oryza sativa subsp. japonica (Rice).